Consider the following 113-residue polypeptide: Antisense of depressing factor protein 1 (113 aa).

A compositionally biased stretch (basic residues) spans 1–11; that stretch reads MGKCSMKKKGV. Positions 1-35 are disordered; it reads MGKCSMKKKGVGKNVGVGKKVQKKRSISTAERKRT.

This sequence belongs to the ADF1 family.

It localises to the nucleus. In terms of biological role, transcriptional repressor which negatively regulates transcription of FYV5 by binding to the promoter on the sense strand. This chain is Antisense of depressing factor protein 1, found in Saccharomyces cerevisiae (strain ATCC 204508 / S288c) (Baker's yeast).